The following is a 108-amino-acid chain: Large ribosomal subunit protein P1B (108 aa).

The span at Ala-72 to Ala-84 shows a compositional bias: low complexity. The disordered stretch occupies residues Ala-72 to Asp-108. Acidic residues predominate over residues Ala-85–Met-102.

Belongs to the eukaryotic ribosomal protein P1/P2 family. As to quaternary structure, P1 and P2 exist as dimers at the large ribosomal subunit. In terms of processing, phosphorylated.

Functionally, plays an important role in the elongation step of protein synthesis. This Candida albicans (Yeast) protein is Large ribosomal subunit protein P1B (RPP1B).